Reading from the N-terminus, the 300-residue chain is GTP-binding protein At2g22870 (300 aa).

The region spanning 119–297 (DRPEIAILGR…LLHMSQLRNY (179 aa)) is the EngB-type G domain. GTP is bound by residues 127–134 (GRSNVGKS), 154–158 (GKTQL), 172–175 (DLPG), 239–242 (TKCD), and 276–278 (TSS). Ser134 and Thr156 together coordinate Mg(2+).

It belongs to the TRAFAC class TrmE-Era-EngA-EngB-Septin-like GTPase superfamily. EngB GTPase family. It depends on Mg(2+) as a cofactor.

The sequence is that of GTP-binding protein At2g22870 (EMB2001) from Arabidopsis thaliana (Mouse-ear cress).